Reading from the N-terminus, the 551-residue chain is RCC1 and BTB domain-containing protein 2 (551 aa).

RCC1 repeat units follow at residues 64–115, 117–169, 171–222, 223–274, 276–326, and 328–382; these read NDEI…VLAT, EGEV…VLTS, GEVF…AVVD, TGEV…VLTD, GQVY…AAKT, and GGHV…TVAE. Positions 394 to 457 constitute a BTB domain; it reads ADLKFLVDGK…LYTDSISLSP (64 aa).

Its subcellular location is the cytoplasmic vesicle. The protein resides in the secretory vesicle. The protein localises to the acrosome. This Homo sapiens (Human) protein is RCC1 and BTB domain-containing protein 2 (RCBTB2).